The primary structure comprises 463 residues: L-seryl-tRNA(Sec) selenium transferase (463 aa).

An N6-(pyridoxal phosphate)lysine modification is found at Lys295.

This sequence belongs to the SelA family. As to quaternary structure, homodecamer; pentamer of dimers. Binds only one seryl-tRNA(Sec) per dimer. Pyridoxal 5'-phosphate is required as a cofactor.

The protein localises to the cytoplasm. The enzyme catalyses L-seryl-tRNA(Sec) + selenophosphate + H(+) = L-selenocysteinyl-tRNA(Sec) + phosphate. The protein operates within aminoacyl-tRNA biosynthesis; selenocysteinyl-tRNA(Sec) biosynthesis; selenocysteinyl-tRNA(Sec) from L-seryl-tRNA(Sec) (bacterial route): step 1/1. Converts seryl-tRNA(Sec) to selenocysteinyl-tRNA(Sec) required for selenoprotein biosynthesis. This chain is L-seryl-tRNA(Sec) selenium transferase, found in Escherichia fergusonii (strain ATCC 35469 / DSM 13698 / CCUG 18766 / IAM 14443 / JCM 21226 / LMG 7866 / NBRC 102419 / NCTC 12128 / CDC 0568-73).